Consider the following 345-residue polypeptide: uncharacterized protein (345 aa).

This is an uncharacterized protein from Archaeoglobus fulgidus (strain ATCC 49558 / DSM 4304 / JCM 9628 / NBRC 100126 / VC-16).